Reading from the N-terminus, the 1510-residue chain is Chromosome partition protein MukB (1510 aa).

Positions 6–30 (ELENEIELESDEVIMENENVEEIVD) form a coiled coil. ATP is bound at residue 75–82 (GGNGAGKS). 7 coiled-coil regions span residues 346 to 506 (QHRL…HKMS), 553 to 633 (QQTP…NLTA), 673 to 706 (MQSQLVKERELTMQRDQLEQKRLQLDEQISRLSQ), 821 to 847 (RAAREKRLEELQIERDEVAEQYAQIAF), 876 to 1064 (EELM…IQLQ), 1094 to 1149 (ERAR…RELV), and 1249 to 1305 (DAIE…QNIS). The interval 707–824 (PDGSEDPRLN…EIPLFGRAAR (118 aa)) is flexible hinge.

The protein belongs to the SMC family. MukB subfamily. Homodimerization via its hinge domain. Binds to DNA via its C-terminal region. Interacts, and probably forms a ternary complex, with MukE and MukF via its C-terminal region. The complex formation is stimulated by calcium or magnesium. Interacts with tubulin-related protein FtsZ.

It is found in the cytoplasm. The protein localises to the nucleoid. Functionally, plays a central role in chromosome condensation, segregation and cell cycle progression. Functions as a homodimer, which is essential for chromosome partition. Involved in negative DNA supercoiling in vivo, and by this means organize and compact chromosomes. May achieve or facilitate chromosome segregation by condensation DNA from both sides of a centrally located replisome during cell division. In Haemophilus influenzae (strain 86-028NP), this protein is Chromosome partition protein MukB.